Reading from the N-terminus, the 754-residue chain is MDMRSGDREFPNGDFYSGEVKGIIPNGKGKYAWSDGTIYEGDWDEGKISGKGKLIWSSGAKYEGDFSGGYLHGFGTMTSPDESVYSGAWRMNVRHGLGRKEYCNSDLYDGLWKEGLQDGRGSYSWTNGNRYIGNWKKGKMCERGVMRWENGDLYDGFWLNGFRHGSGVYKFADGCLYYGTWSRGLKDGKGVFYPAGTKQPSLKKWCRSLEYDDTGKFVLSRSASVNVEELRSLNTVTQSLSVKTSAGETTCDPPRDFTCHGPVSKSARFSGSGQSEGQDKNRIVYEREYMQGVLIRETIMSSVDRSHKIKPPNRPREVRARSLMTFLRGEHNYYLMLNLQLGIRYTVGKITPVPRREVRASDFGKNARTKMFFPRDGSNFTPPHKSVDFSWKDYCPMVFRNLRQMFKLDAAEYMMSICGDDGLTEISSPGKSGSIFYLSHDDRFVIKTLKKSELQVLLRMLPKYYEHVGDHENTLITKFFGVHRITLKWGKKVRFVVMGNMFCTELKIHRRYDLKGSTQGRFTEKIKIQEKTTLKDLDLAYEFHMDKLLREALFKQIYLDCSFLESLNIIDYSLLLGLHFRAPGQLNDILEPPNAMSDQESVSSVDVGLTQEHSIPPKGLLLVTHEPNSVNTAPGPHIRGSTLRAFSVGEQEVDLILPGTARLRVQLGVNMPAQAHHKLIEDKEESATIELFEVYDVVVYMGIIDILQEYNTKKKVEHTCKSLQYDPMTISVTEPSTYSKRFVNFLHKVFPEER.

MORN repeat units lie at residues 16 to 38 (YSGE…DGTI), 39 to 61 (YEGD…SGAK), 62 to 84 (YEGD…DESV), 85 to 107 (YSGA…NSDL), 108 to 130 (YDGL…NGNR), 131 to 153 (YIGN…NGDL), 154 to 176 (YDGF…DGCL), and 177 to 198 (YYGT…AGTK). The region spanning 329-750 (GEHNYYLMLN…RFVNFLHKVF (422 aa)) is the PIPK domain. Residues 710–731 (YNTKKKVEHTCKSLQYDPMTIS) are activation loop.

The enzyme catalyses a 1,2-diacyl-sn-glycero-3-phospho-(1D-myo-inositol 4-phosphate) + ATP = a 1,2-diacyl-sn-glycero-3-phospho-(1D-myo-inositol-4,5-bisphosphate) + ADP + H(+). In Arabidopsis thaliana (Mouse-ear cress), this protein is Phosphatidylinositol 4-phosphate 5-kinase 7 (PIP5K7).